The sequence spans 98 residues: Class II hydrophobin 3 (98 aa).

Positions 1 to 18 (MQFTTTTLIAILSALAVA) are cleaved as a signal peptide. N-linked (GlcNAc...) asparagine glycans are attached at residues Asn26 and Asn54. 4 cysteine pairs are disulfide-bonded: Cys35/Cys83, Cys44/Cys74, Cys45/Cys57, and Cys84/Cys95.

Belongs to the cerato-ulmin hydrophobin family.

It localises to the secreted. It is found in the cell wall. Aerial growth, conidiation, and dispersal of filamentous fungi in the environment rely upon a capability of their secreting small amphipathic proteins called hydrophobins (HPBs) with low sequence identity. Class I can self-assemble into an outermost layer of rodlet bundles on aerial cell surfaces, conferring cellular hydrophobicity that supports fungal growth, development and dispersal; whereas Class II form highly ordered films at water-air interfaces through intermolecular interactions but contribute nothing to the rodlet structure. In Botryotinia fuckeliana, hydrophobins are not involved in conferring surface hydrophobicity to conidia and aerial hyphae and their function in sclerotia and fruiting bodies remains to be investigated. This is Class II hydrophobin 3 from Botryotinia fuckeliana (strain B05.10) (Noble rot fungus).